A 274-amino-acid polypeptide reads, in one-letter code: Thiamine kinase (274 aa).

It belongs to the thiamine kinase family.

The catalysed reaction is thiamine + ATP = thiamine phosphate + ADP + H(+). The protein operates within cofactor biosynthesis; thiamine diphosphate biosynthesis; thiamine phosphate from thiamine: step 1/1. Catalyzes the ATP-dependent phosphorylation of thiamine to thiamine phosphate. Is involved in thiamine salvage. The chain is Thiamine kinase from Shigella flexneri serotype 5b (strain 8401).